We begin with the raw amino-acid sequence, 349 residues long: Aspartate carbamoyltransferase catalytic subunit (349 aa).

2 residues coordinate carbamoyl phosphate: arginine 59 and threonine 60. Lysine 87 serves as a coordination point for L-aspartate. 3 residues coordinate carbamoyl phosphate: arginine 109, histidine 142, and glutamine 145. L-aspartate-binding residues include arginine 182 and arginine 253. Carbamoyl phosphate-binding residues include glycine 294 and proline 295.

This sequence belongs to the aspartate/ornithine carbamoyltransferase superfamily. ATCase family. Heterododecamer (2C3:3R2) of six catalytic PyrB chains organized as two trimers (C3), and six regulatory PyrI chains organized as three dimers (R2).

The enzyme catalyses carbamoyl phosphate + L-aspartate = N-carbamoyl-L-aspartate + phosphate + H(+). It participates in pyrimidine metabolism; UMP biosynthesis via de novo pathway; (S)-dihydroorotate from bicarbonate: step 2/3. Its function is as follows. Catalyzes the condensation of carbamoyl phosphate and aspartate to form carbamoyl aspartate and inorganic phosphate, the committed step in the de novo pyrimidine nucleotide biosynthesis pathway. This is Aspartate carbamoyltransferase catalytic subunit from Synechococcus sp. (strain CC9605).